Reading from the N-terminus, the 192-residue chain is UPF0312 protein Ent638_1570 (192 aa).

Residues 1-22 form the signal peptide; sequence MKKRLLGIALGSLLFTTGSAVA.

Belongs to the UPF0312 family. Type 1 subfamily.

It is found in the periplasm. The sequence is that of UPF0312 protein Ent638_1570 from Enterobacter sp. (strain 638).